The primary structure comprises 297 residues: PAK4-inhibitor INKA2 (297 aa).

Disordered stretches follow at residues 82–109, 175–200, and 234–285; these read GRGP…PSHR, LEKG…PQEL, and TPMV…LEHS. Over residues 92–102 the composition is skewed to low complexity; it reads SPSSQPSLGSS. Residues 137–180 are inka box; that stretch reads EPDDWTSTLMSRGRNRQPLVLGDNVFADLVGNWLDLPELEKGGE. Positions 244–253 are enriched in basic residues; that stretch reads RSQKVKKRSL.

Belongs to the INKA family. In terms of assembly, interacts with PAK4.

It localises to the nucleus. Inhibitor of the serine/threonine-protein kinase PAK4. Acts by binding PAK4 in a substrate-like manner, inhibiting the protein kinase activity. The sequence is that of PAK4-inhibitor INKA2 from Homo sapiens (Human).